The primary structure comprises 177 residues: tRNA-splicing endonuclease (177 aa).

Catalysis depends on residues tyrosine 114, histidine 123, and lysine 154.

Belongs to the tRNA-intron endonuclease family. Archaeal short subfamily. Homotetramer; although the tetramer contains four active sites, only two participate in the cleavage. Therefore, it should be considered as a dimer of dimers.

It carries out the reaction pretRNA = a 3'-half-tRNA molecule with a 5'-OH end + a 5'-half-tRNA molecule with a 2',3'-cyclic phosphate end + an intron with a 2',3'-cyclic phosphate and a 5'-hydroxyl terminus.. In terms of biological role, endonuclease that removes tRNA introns. Cleaves pre-tRNA at the 5'- and 3'-splice sites to release the intron. The products are an intron and two tRNA half-molecules bearing 2',3' cyclic phosphate and 5'-OH termini. Recognizes a pseudosymmetric substrate in which 2 bulged loops of 3 bases are separated by a stem of 4 bp. This is tRNA-splicing endonuclease from Methanococcus maripaludis (strain DSM 14266 / JCM 13030 / NBRC 101832 / S2 / LL).